The sequence spans 814 residues: Telomere repeats-binding bouquet formation protein 1 (814 aa).

ARM repeat units lie at residues 93 to 136 (EMFR…KTSR) and 327 to 368 (GGLP…GMST). Disordered stretches follow at residues 461–521 (DQDS…ELKR), 551–584 (STPTEGNRDTQGPDIFRHPDPVKRNQREPSLSDD), and 653–753 (FRRS…KRQN). The stretch at 488-512 (EKSKKRKHKQKRENERSDNQETRRE) forms a coiled coil. Composition is skewed to basic and acidic residues over residues 499–521 (RENERSDNQETRREGVNKRELKR), 565–577 (IFRHPDPVKRNQR), and 679–688 (EHSTSAQEHK). The segment covering 689-699 (QKSKREKHKLS) has biased composition (basic residues). Residues 714-741 (RPRETYSPDVKQWTDHRHLKKSSEDARS) show a composition bias toward basic and acidic residues. The region spanning 746–799 (GRHRKRQNWSDKELCYLTKGVKRFGHSWNTILWKYPFHPGRTNVDLAKKFYHMQ) is the Myb-like domain.

Belongs to the TERB1 family. As to quaternary structure, component of the MAJIN-TERB1-TERB2 complex.

It is found in the chromosome. The protein localises to the telomere. It localises to the nucleus inner membrane. In terms of biological role, meiosis-specific telomere-associated protein involved in meiotic telomere attachment to the nucleus inner membrane, a crucial step for homologous pairing and synapsis. Component of the MAJIN-TERB1-TERB2 complex, which promotes telomere cap exchange by mediating attachment of telomeric DNA to the inner nuclear membrane and replacement of the protective cap of telomeric chromosomes: in early meiosis, the MAJIN-TERB1-TERB2 complex associates with telomeric DNA and the shelterin/telosome complex. During prophase, the complex matures and promotes release of the shelterin/telosome complex from telomeric DNA. In the MAJIN-TERB1-TERB2 complex, TERB1 probably mediates association with the shelterin/telosome complex. This is Telomere repeats-binding bouquet formation protein 1 (ccdc79) from Danio rerio (Zebrafish).